The primary structure comprises 224 residues: UPF0173 metal-dependent hydrolase Memar_1421 (224 aa).

This sequence belongs to the UPF0173 family.

In Methanoculleus marisnigri (strain ATCC 35101 / DSM 1498 / JR1), this protein is UPF0173 metal-dependent hydrolase Memar_1421.